The chain runs to 430 residues: Probable aspartic-type endopeptidase TRV_06366 (430 aa).

A signal peptide spans 1-17 (MHVSTLLVAVLLPLALS). Positions 18–87 (KPTPRKKTSS…SKATAGSGKE (70 aa)) are cleaved as a propeptide — activation peptide. The disordered stretch occupies residues 61–104 (HEMEGYHPQPISKLPGNSKATAGSGKEGVESQDEKGEVVNNPTD). A compositionally biased stretch (basic and acidic residues) spans 87 to 104 (EGVESQDEKGEVVNNPTD). A Peptidase A1 domain is found at 109–427 (FLSPVTIGGQ…DQRGPSISLA (319 aa)). Asp125 is a catalytic residue. Asn306 carries N-linked (GlcNAc...) asparagine glycosylation. The active site involves Asp314.

The protein belongs to the peptidase A1 family.

It is found in the secreted. Functionally, probable secreted aspartic-type endopeptidase which contributes to virulence. In Trichophyton verrucosum (strain HKI 0517), this protein is Probable aspartic-type endopeptidase TRV_06366.